We begin with the raw amino-acid sequence, 278 residues long: Ribosomal RNA small subunit methyltransferase A (278 aa).

Residues asparagine 27, leucine 29, glycine 54, glutamate 75, aspartate 101, and asparagine 120 each coordinate S-adenosyl-L-methionine.

Belongs to the class I-like SAM-binding methyltransferase superfamily. rRNA adenine N(6)-methyltransferase family. RsmA subfamily.

Its subcellular location is the cytoplasm. It carries out the reaction adenosine(1518)/adenosine(1519) in 16S rRNA + 4 S-adenosyl-L-methionine = N(6)-dimethyladenosine(1518)/N(6)-dimethyladenosine(1519) in 16S rRNA + 4 S-adenosyl-L-homocysteine + 4 H(+). Specifically dimethylates two adjacent adenosines (A1518 and A1519) in the loop of a conserved hairpin near the 3'-end of 16S rRNA in the 30S particle. May play a critical role in biogenesis of 30S subunits. The chain is Ribosomal RNA small subunit methyltransferase A from Zymomonas mobilis subsp. mobilis (strain ATCC 31821 / ZM4 / CP4).